A 479-amino-acid polypeptide reads, in one-letter code: Small ribosomal subunit protein bS1 (479 aa).

S1 motif domains lie at 36–105 (GDIV…LSKK), 123–188 (DEAV…LSRR), 209–277 (GAIR…LSLK), and 294–363 (GQIV…LSLK). Positions 429-466 (TAQMEKFAAAEAEAANAPVSNGSSRSEESSGGTLASDA) are disordered. Residues 437 to 460 (AAEAEAANAPVSNGSSRSEESSGG) are compositionally biased toward low complexity.

The protein belongs to the bacterial ribosomal protein bS1 family. As to quaternary structure, binds uncharacterized protein MSMEG_2731/MSMEI_2664.

Functionally, binds mRNA, facilitating recognition of most mRNAs by the 30S ribosomal subunit during translation initiation. Plays a role in trans-translation; binds tmRNA (the product of the ssrA gene). Binds very poorly to pyrazinoic acid (POA), the active form of the prodrug pyrazinamide (PZA); POA does not disrupt trans-translation in this organism. M.smegmatis is resistant to the antibiotic PZA. In trans-translation Ala-aminoacylated transfer-messenger RNA (tmRNA, product of the ssrA gene; the 2 termini fold to resemble tRNA(Ala) while it encodes a short internal open reading frame (the tag peptide)) acts like a tRNA, entering the A-site of the ribosome and displacing the stalled mRNA (which is subsequently degraded). The ribosome then switches to translate the ORF on the tmRNA, the nascent peptide is terminated with the 'tag peptide' encoded by the tmRNA and thus targeted for degradation. In Mycolicibacterium smegmatis (strain ATCC 700084 / mc(2)155) (Mycobacterium smegmatis), this protein is Small ribosomal subunit protein bS1 (rpsA).